We begin with the raw amino-acid sequence, 153 residues long: Ribosome maturation factor RimP (153 aa).

Belongs to the RimP family.

Its subcellular location is the cytoplasm. Functionally, required for maturation of 30S ribosomal subunits. This is Ribosome maturation factor RimP from Glaesserella parasuis serovar 5 (strain SH0165) (Haemophilus parasuis).